The sequence spans 833 residues: Coiled-coil domain-containing protein 110 (833 aa).

Positions 431 to 778 (LQNYLKESVQ…REYLNLSDKI (348 aa)) form a coiled coil.

It localises to the nucleus. The polypeptide is Coiled-coil domain-containing protein 110 (CCDC110) (Macaca fascicularis (Crab-eating macaque)).